The primary structure comprises 909 residues: Golgin subfamily A member 6-like protein 2 (909 aa).

The span at 1-11 (MWPQPHLPPHP) shows a compositional bias: pro residues. 5 disordered regions span residues 1–88 (MWPQ…ASHQ), 300–362 (ERLR…EQEE), 381–408 (QEKQ…RLRE), 425–494 (KMRE…QRLP), and 524–909 (EEMW…QSSL). A compositionally biased stretch (basic and acidic residues) spans 13 to 31 (MSEKTRQNKLAEAKKKFTD). Over residues 53 to 77 (NNGTNPETTTSEGCHSPEDTQQNRA) the composition is skewed to polar residues. A compositionally biased stretch (basic and acidic residues) spans 78-88 (QLKEEKKASHQ). A coiled-coil region spans residues 192–526 (HKKADRYIEE…EEKIRDQEEM (335 aa)). Composition is skewed to basic and acidic residues over residues 425-478 (KMRE…KQEE) and 524-542 (EEMW…MREQ). A compositionally biased stretch (acidic residues) spans 607-620 (AGGEEDAGAGEEDM). 2 stretches are compositionally biased toward gly residues: residues 641-654 (GGGG…GEDA) and 676-689 (GAGG…GEDV). The span at 692-719 (GRRRCGSSRGCRNRRRSCGNTRRCRSRR) shows a compositional bias: basic residues. Over residues 746–755 (AGAEDVAAGG) the composition is skewed to low complexity. Over residues 757–766 (DAGEEEDAGG) the composition is skewed to acidic residues. Over residues 791–871 (GAGGEDVGAG…AGGEDVGAGG (81 aa)) the composition is skewed to gly residues. The span at 872-892 (DAREGGEDTRSEREDAGEAAR) shows a compositional bias: basic and acidic residues.

Belongs to the GOLGA6 family.

The polypeptide is Golgin subfamily A member 6-like protein 2 (GOLGA6L2) (Homo sapiens (Human)).